The sequence spans 211 residues: Protein-L-isoaspartate O-methyltransferase (211 aa).

S62 is a catalytic residue.

The protein belongs to the methyltransferase superfamily. L-isoaspartyl/D-aspartyl protein methyltransferase family.

The protein localises to the cytoplasm. The enzyme catalyses [protein]-L-isoaspartate + S-adenosyl-L-methionine = [protein]-L-isoaspartate alpha-methyl ester + S-adenosyl-L-homocysteine. Functionally, catalyzes the methyl esterification of L-isoaspartyl residues in peptides and proteins that result from spontaneous decomposition of normal L-aspartyl and L-asparaginyl residues. It plays a role in the repair and/or degradation of damaged proteins. This chain is Protein-L-isoaspartate O-methyltransferase, found in Shewanella sp. (strain ANA-3).